The following is a 123-amino-acid chain: Molluscan insulin-related peptide 1 (123 aa).

The first 31 residues, 1–31, serve as a signal peptide directing secretion; the sequence is MAGVRLVFTKAFMVTVLLTLLLNIGVKPAEG. Gln-32 bears the Pyrrolidone carboxylic acid mark. 3 disulfide bridges follow: Cys-48/Cys-109, Cys-60/Cys-122, and Cys-108/Cys-113. The propeptide occupies 68-69; the sequence is MV. A Pyrrolidone carboxylic acid modification is found at Gln-99.

Belongs to the insulin family. Heterodimer of a B chain and an A chain linked by two disulfide bonds. In terms of tissue distribution, expressed in the cerebral light-green cells which are giant neuroendocrines cells involved in the control of growth.

It is found in the cytoplasmic vesicle. The protein localises to the secretory vesicle. In Lymnaea stagnalis (Great pond snail), this protein is Molluscan insulin-related peptide 1.